We begin with the raw amino-acid sequence, 493 residues long: Protein nucleotidyltransferase YdiU (493 aa).

8 residues coordinate ATP: glycine 81, glycine 83, arginine 84, lysine 103, aspartate 115, glycine 116, arginine 166, and arginine 173. The Proton acceptor role is filled by aspartate 244. The Mg(2+) site is built by asparagine 245 and aspartate 254. Aspartate 254 contributes to the ATP binding site.

Belongs to the SELO family. Mg(2+) serves as cofactor. It depends on Mn(2+) as a cofactor.

It carries out the reaction L-seryl-[protein] + ATP = 3-O-(5'-adenylyl)-L-seryl-[protein] + diphosphate. It catalyses the reaction L-threonyl-[protein] + ATP = 3-O-(5'-adenylyl)-L-threonyl-[protein] + diphosphate. The enzyme catalyses L-tyrosyl-[protein] + ATP = O-(5'-adenylyl)-L-tyrosyl-[protein] + diphosphate. The catalysed reaction is L-histidyl-[protein] + UTP = N(tele)-(5'-uridylyl)-L-histidyl-[protein] + diphosphate. It carries out the reaction L-seryl-[protein] + UTP = O-(5'-uridylyl)-L-seryl-[protein] + diphosphate. It catalyses the reaction L-tyrosyl-[protein] + UTP = O-(5'-uridylyl)-L-tyrosyl-[protein] + diphosphate. Nucleotidyltransferase involved in the post-translational modification of proteins. It can catalyze the addition of adenosine monophosphate (AMP) or uridine monophosphate (UMP) to a protein, resulting in modifications known as AMPylation and UMPylation. The chain is Protein nucleotidyltransferase YdiU from Shewanella frigidimarina (strain NCIMB 400).